Reading from the N-terminus, the 176-residue chain is Cytochrome b (176 aa).

A run of 3 helical transmembrane segments spans residues F33–M53, W77–V98, and W113–L133. 2 residues coordinate heme b: H83 and H97.

The protein belongs to the cytochrome b family. The cytochrome bc1 complex contains 11 subunits: 3 respiratory subunits (MT-CYB, CYC1 and UQCRFS1), 2 core proteins (UQCRC1 and UQCRC2) and 6 low-molecular weight proteins (UQCRH/QCR6, UQCRB/QCR7, UQCRQ/QCR8, UQCR10/QCR9, UQCR11/QCR10 and a cleavage product of UQCRFS1). This cytochrome bc1 complex then forms a dimer. Heme b is required as a cofactor.

It localises to the mitochondrion inner membrane. In terms of biological role, component of the ubiquinol-cytochrome c reductase complex (complex III or cytochrome b-c1 complex) that is part of the mitochondrial respiratory chain. The b-c1 complex mediates electron transfer from ubiquinol to cytochrome c. Contributes to the generation of a proton gradient across the mitochondrial membrane that is then used for ATP synthesis. The protein is Cytochrome b (MT-CYB) of Tomopeas ravum (Blunt-eared bat).